A 597-amino-acid chain; its full sequence is Elongation factor 4 (597 aa).

In terms of domain architecture, tr-type G spans 4 to 181 (SKIRNFSIIA…AIVDYVPAPK (178 aa)). GTP-binding positions include 16–21 (DHGKST) and 128–131 (NKID).

The protein belongs to the TRAFAC class translation factor GTPase superfamily. Classic translation factor GTPase family. LepA subfamily.

Its subcellular location is the cell membrane. The enzyme catalyses GTP + H2O = GDP + phosphate + H(+). Functionally, required for accurate and efficient protein synthesis under certain stress conditions. May act as a fidelity factor of the translation reaction, by catalyzing a one-codon backward translocation of tRNAs on improperly translocated ribosomes. Back-translocation proceeds from a post-translocation (POST) complex to a pre-translocation (PRE) complex, thus giving elongation factor G a second chance to translocate the tRNAs correctly. Binds to ribosomes in a GTP-dependent manner. The chain is Elongation factor 4 from Mycoplasmopsis agalactiae (strain NCTC 10123 / CIP 59.7 / PG2) (Mycoplasma agalactiae).